We begin with the raw amino-acid sequence, 276 residues long: Large ribosomal subunit protein uL2 (276 aa).

Positions 223-276 are disordered; sequence VVMNPVDHPHGGGEGKSSGGRHPVSPWGKKTRGPKTRNNKVTDRLIIRRRNAKR. Residues 251–260 show a composition bias toward basic residues; sequence KKTRGPKTRN.

This sequence belongs to the universal ribosomal protein uL2 family. As to quaternary structure, part of the 50S ribosomal subunit. Forms a bridge to the 30S subunit in the 70S ribosome.

One of the primary rRNA binding proteins. Required for association of the 30S and 50S subunits to form the 70S ribosome, for tRNA binding and peptide bond formation. It has been suggested to have peptidyltransferase activity; this is somewhat controversial. Makes several contacts with the 16S rRNA in the 70S ribosome. This chain is Large ribosomal subunit protein uL2, found in Hyphomonas neptunium (strain ATCC 15444).